The following is a 140-amino-acid chain: uncharacterized protein (140 aa).

Residues 80 to 115 (KNGTRRHALPSPLEGSFQPGRQIPPPQTPSTDPQTL) are disordered.

This is an uncharacterized protein from Homo sapiens (Human).